The primary structure comprises 112 residues: UPF0235 protein RHE_CH03912 (112 aa).

This sequence belongs to the UPF0235 family.

The polypeptide is UPF0235 protein RHE_CH03912 (Rhizobium etli (strain ATCC 51251 / DSM 11541 / JCM 21823 / NBRC 15573 / CFN 42)).